We begin with the raw amino-acid sequence, 907 residues long: Alanine--tRNA ligase (907 aa).

Histidine 581, histidine 585, cysteine 683, and histidine 687 together coordinate Zn(2+).

It belongs to the class-II aminoacyl-tRNA synthetase family. Zn(2+) is required as a cofactor.

The protein resides in the cytoplasm. It carries out the reaction tRNA(Ala) + L-alanine + ATP = L-alanyl-tRNA(Ala) + AMP + diphosphate. Catalyzes the attachment of alanine to tRNA(Ala) in a two-step reaction: alanine is first activated by ATP to form Ala-AMP and then transferred to the acceptor end of tRNA(Ala). Also edits incorrectly charged Ser-tRNA(Ala) and Gly-tRNA(Ala) via its editing domain. This is Alanine--tRNA ligase from Bdellovibrio bacteriovorus (strain ATCC 15356 / DSM 50701 / NCIMB 9529 / HD100).